The primary structure comprises 121 residues: Large ribosomal subunit protein bL12 (121 aa).

The protein belongs to the bacterial ribosomal protein bL12 family. Homodimer. Part of the ribosomal stalk of the 50S ribosomal subunit. Forms a multimeric L10(L12)X complex, where L10 forms an elongated spine to which 2 to 4 L12 dimers bind in a sequential fashion. Binds GTP-bound translation factors.

Forms part of the ribosomal stalk which helps the ribosome interact with GTP-bound translation factors. Is thus essential for accurate translation. This chain is Large ribosomal subunit protein bL12, found in Streptococcus uberis (strain ATCC BAA-854 / 0140J).